Consider the following 397-residue polypeptide: Imidazolonepropionase (397 aa).

2 residues coordinate Fe(3+): His66 and His68. His66 and His68 together coordinate Zn(2+). Positions 75, 138, and 171 each coordinate 4-imidazolone-5-propanoate. N-formimidoyl-L-glutamate is bound at residue Tyr138. Position 236 (His236) interacts with Fe(3+). His236 lines the Zn(2+) pocket. 4-imidazolone-5-propanoate is bound at residue Gln239. Asp311 lines the Fe(3+) pocket. Residue Asp311 coordinates Zn(2+). Residues Asn313 and Gly315 each coordinate N-formimidoyl-L-glutamate. Residue Ser316 participates in 4-imidazolone-5-propanoate binding.

This sequence belongs to the metallo-dependent hydrolases superfamily. HutI family. It depends on Zn(2+) as a cofactor. Fe(3+) is required as a cofactor.

It is found in the cytoplasm. The enzyme catalyses 4-imidazolone-5-propanoate + H2O = N-formimidoyl-L-glutamate. It functions in the pathway amino-acid degradation; L-histidine degradation into L-glutamate; N-formimidoyl-L-glutamate from L-histidine: step 3/3. Catalyzes the hydrolytic cleavage of the carbon-nitrogen bond in imidazolone-5-propanoate to yield N-formimidoyl-L-glutamate. It is the third step in the universal histidine degradation pathway. In Roseobacter denitrificans (strain ATCC 33942 / OCh 114) (Erythrobacter sp. (strain OCh 114)), this protein is Imidazolonepropionase.